The chain runs to 180 residues: Crossover junction endodeoxyribonuclease RuvC (180 aa).

Residues Asp9, Glu74, and Asp146 contribute to the active site. Mg(2+)-binding residues include Asp9, Glu74, and Asp146.

The protein belongs to the RuvC family. In terms of assembly, homodimer which binds Holliday junction (HJ) DNA. The HJ becomes 2-fold symmetrical on binding to RuvC with unstacked arms; it has a different conformation from HJ DNA in complex with RuvA. In the full resolvosome a probable DNA-RuvA(4)-RuvB(12)-RuvC(2) complex forms which resolves the HJ. It depends on Mg(2+) as a cofactor.

The protein resides in the cytoplasm. The catalysed reaction is Endonucleolytic cleavage at a junction such as a reciprocal single-stranded crossover between two homologous DNA duplexes (Holliday junction).. Its function is as follows. The RuvA-RuvB-RuvC complex processes Holliday junction (HJ) DNA during genetic recombination and DNA repair. Endonuclease that resolves HJ intermediates. Cleaves cruciform DNA by making single-stranded nicks across the HJ at symmetrical positions within the homologous arms, yielding a 5'-phosphate and a 3'-hydroxyl group; requires a central core of homology in the junction. The consensus cleavage sequence is 5'-(A/T)TT(C/G)-3'. Cleavage occurs on the 3'-side of the TT dinucleotide at the point of strand exchange. HJ branch migration catalyzed by RuvA-RuvB allows RuvC to scan DNA until it finds its consensus sequence, where it cleaves and resolves the cruciform DNA. The chain is Crossover junction endodeoxyribonuclease RuvC from Methylobacillus flagellatus (strain ATCC 51484 / DSM 6875 / VKM B-1610 / KT).